Here is a 249-residue protein sequence, read N- to C-terminus: Isoprenyl transferase (249 aa).

Residue aspartate 25 is part of the active site. Aspartate 25 is a Mg(2+) binding site. Residues 26-29 (GNGR), tryptophan 30, arginine 38, histidine 42, and 70-72 (STE) contribute to the substrate site. Asparagine 73 serves as the catalytic Proton acceptor. Residues tryptophan 74, arginine 76, arginine 197, and 203-205 (RLS) each bind substrate. Glutamate 216 contributes to the Mg(2+) binding site.

Belongs to the UPP synthase family. As to quaternary structure, homodimer. Mg(2+) serves as cofactor.

Catalyzes the condensation of isopentenyl diphosphate (IPP) with allylic pyrophosphates generating different type of terpenoids. This Streptococcus pyogenes serotype M6 (strain ATCC BAA-946 / MGAS10394) protein is Isoprenyl transferase.